The sequence spans 598 residues: N-acetylmuramoyl-L-alanine amidase (598 aa).

Residues 1 to 31 form the signal peptide; it reads MSPGNWKTTMVVRGILLILYGLLLQPEPGTA. Disordered stretches follow at residues 172-194 and 212-233; these read SSAH…SPNV and STGV…KAKS. Position 261 is a phosphoserine (serine 261). The N-linked (GlcNAc...) asparagine glycan is linked to asparagine 353. One can recognise an N-acetylmuramoyl-L-alanine amidase domain in the interval 428–554; it reads FLYIHHTYVP…RQLVRTDCPG (127 aa). Histidine 432 is a Zn(2+) binding site. Residues cysteine 441 and cysteine 447 are joined by a disulfide bond. Asparagine 507 carries an N-linked (GlcNAc...) asparagine glycan. Zn(2+) contacts are provided by histidine 544 and cysteine 552.

It belongs to the N-acetylmuramoyl-L-alanine amidase 2 family. The cofactor is Zn(2+).

The protein resides in the secreted. It localises to the membrane. The catalysed reaction is Hydrolyzes the link between N-acetylmuramoyl residues and L-amino acid residues in certain cell-wall glycopeptides.. In terms of biological role, may play a scavenger role by digesting biologically active peptidoglycan (PGN) into biologically inactive fragments. Has no direct bacteriolytic activity. The polypeptide is N-acetylmuramoyl-L-alanine amidase (PGLYRP2) (Sus scrofa (Pig)).